The chain runs to 160 residues: Ribosomal RNA large subunit methyltransferase H (160 aa).

S-adenosyl-L-methionine is bound by residues glycine 108 and 127-132 (FGLMTW).

Belongs to the RNA methyltransferase RlmH family. In terms of assembly, homodimer.

The protein resides in the cytoplasm. The enzyme catalyses pseudouridine(1915) in 23S rRNA + S-adenosyl-L-methionine = N(3)-methylpseudouridine(1915) in 23S rRNA + S-adenosyl-L-homocysteine + H(+). Its function is as follows. Specifically methylates the pseudouridine at position 1915 (m3Psi1915) in 23S rRNA. This chain is Ribosomal RNA large subunit methyltransferase H, found in Bartonella bacilliformis (strain ATCC 35685 / KC583 / Herrer 020/F12,63).